Here is a 600-residue protein sequence, read N- to C-terminus: NADH-quinone oxidoreductase subunit C/D (600 aa).

An NADH dehydrogenase I subunit C region spans residues 1-190; it reads MVNNMTDLTA…DPFELTKAKQ (190 aa). An NADH dehydrogenase I subunit D region spans residues 214–600; that stretch reads DFMFLNLGPN…IDFVMSDVDR (387 aa).

This sequence in the N-terminal section; belongs to the complex I 30 kDa subunit family. In the C-terminal section; belongs to the complex I 49 kDa subunit family. NDH-1 is composed of 13 different subunits. Subunits NuoB, CD, E, F, and G constitute the peripheral sector of the complex.

The protein resides in the cell inner membrane. The catalysed reaction is a quinone + NADH + 5 H(+)(in) = a quinol + NAD(+) + 4 H(+)(out). In terms of biological role, NDH-1 shuttles electrons from NADH, via FMN and iron-sulfur (Fe-S) centers, to quinones in the respiratory chain. The immediate electron acceptor for the enzyme in this species is believed to be ubiquinone. Couples the redox reaction to proton translocation (for every two electrons transferred, four hydrogen ions are translocated across the cytoplasmic membrane), and thus conserves the redox energy in a proton gradient. The polypeptide is NADH-quinone oxidoreductase subunit C/D (Salmonella arizonae (strain ATCC BAA-731 / CDC346-86 / RSK2980)).